The primary structure comprises 248 residues: MKLKSGIVTGVALVLAYGLFLASYAPARLLTAVPLPAGMVVAEAAGTLWQGSLQRFSWRTLTLDDVHWNITFSDFMPALDIAFKNPEGIAGRGIIRGWQRAQFYQWQLSVPAGYLFSHMRFIVPIGAEGNVQLNLQEATVDRSGCQSLDANVTWPGARVKTPLGGLVLATPQATLRCQQGALEANLRQTSSHLQLSGKGSVTPKGEYRFTGQLSSGNDLPATMKKLLATTGKANEQGARTLNFQGRLL.

Residues 1-6 (MKLKSG) lie on the Cytoplasmic side of the membrane. The helical; Signal-anchor for type II membrane protein transmembrane segment at 7-27 (IVTGVALVLAYGLFLASYAPA) threads the bilayer. Residues 28-248 (RLLTAVPLPA…RTLNFQGRLL (221 aa)) are Periplasmic-facing.

This sequence belongs to the GSP N family.

It localises to the cell inner membrane. In terms of biological role, involved in a type II secretion system (T2SS, formerly general secretion pathway, GSP) for the export of proteins. Required for the translocation of the multiple pectic enzymes. The polypeptide is Type II secretion system protein N (outN) (Pectobacterium carotovorum subsp. carotovorum (Erwinia carotovora subsp. carotovora)).